The following is a 199-amino-acid chain: Protein-methionine-sulfoxide reductase heme-binding subunit MsrQ (199 aa).

Transmembrane regions (helical) follow at residues 10–30, 82–102, 116–136, and 153–173; these read WLKV…FWAI, LWCF…ELGI, PYLT…LTST, and VVYL…KILS.

Belongs to the MsrQ family. Heterodimer of a catalytic subunit (MsrP) and a heme-binding subunit (MsrQ). The cofactor is FMN. It depends on heme b as a cofactor.

It localises to the cell inner membrane. Its function is as follows. Part of the MsrPQ system that repairs oxidized periplasmic proteins containing methionine sulfoxide residues (Met-O), using respiratory chain electrons. Thus protects these proteins from oxidative-stress damage caused by reactive species of oxygen and chlorine generated by the host defense mechanisms. MsrPQ is essential for the maintenance of envelope integrity under bleach stress, rescuing a wide series of structurally unrelated periplasmic proteins from methionine oxidation, including the primary periplasmic chaperone SurA and the lipoprotein Pal. MsrQ provides electrons for reduction to the reductase catalytic subunit MsrP, using the quinone pool of the respiratory chain. The chain is Protein-methionine-sulfoxide reductase heme-binding subunit MsrQ from Salmonella agona (strain SL483).